The chain runs to 148 residues: Arginine repressor (148 aa).

It belongs to the ArgR family.

The protein localises to the cytoplasm. It participates in amino-acid biosynthesis; L-arginine biosynthesis [regulation]. Functionally, regulates arginine biosynthesis genes. This is Arginine repressor from Chlorobium chlorochromatii (strain CaD3).